The chain runs to 453 residues: Dihydrolipoyllysine-residue succinyltransferase component of 2-oxoglutarate dehydrogenase complex, mitochondrial (453 aa).

A mitochondrion-targeting transit peptide spans 1-67; it reads MLSRSRCVSR…RFFRTTAVCK (67 aa). In terms of domain architecture, Lipoyl-binding spans 70–144; it reads LVTVKTPAFA…EGGTPLFTLR (75 aa). Serine 81 carries the phosphoserine modification. Lysine 110 carries the N6-lipoyllysine modification. The span at 152-172 shows a compositional bias: low complexity; sequence KAKPAEAPAAAAPKAEPTAAA. The tract at residues 152–225 is disordered; that stretch reads KAKPAEAPAA…GKGLRSEHRE (74 aa). Position 154 is an N6-acetyllysine (lysine 154). Over residues 173-196 the composition is skewed to pro residues; the sequence is VPPPAAPIPTQMPPVPSPSQPPSG. N6-acetyllysine is present on residues lysine 267, lysine 272, lysine 273, lysine 277, and lysine 307. Catalysis depends on residues histidine 424 and aspartate 428.

It belongs to the 2-oxoacid dehydrogenase family. The 2-oxoglutarate dehydrogenase complex is composed of OGDH (2-oxoglutarate dehydrogenase; E1), DLST (dihydrolipoamide succinyltransferase; E2), DLD (dihydrolipoamide dehydrogenase; E3) and the assembly factor KGD4. It contains multiple copies of the three enzymatic components (E1, E2 and E3). In the nucleus, the 2-oxoglutarate dehydrogenase complex associates with KAT2A. Interacts with ABHD11; this interaction maintains the functional lipoylation of the 2-oxoglutarate dehydrogenase complex. (R)-lipoate serves as cofactor.

It localises to the mitochondrion matrix. Its subcellular location is the nucleus. It catalyses the reaction N(6)-[(R)-dihydrolipoyl]-L-lysyl-[protein] + succinyl-CoA = N(6)-[(R)-S(8)-succinyldihydrolipoyl]-L-lysyl-[protein] + CoA. It participates in amino-acid degradation; L-lysine degradation via saccharopine pathway; glutaryl-CoA from L-lysine: step 6/6. It functions in the pathway carbohydrate metabolism; tricarboxylic acid cycle. In terms of biological role, dihydrolipoamide succinyltransferase (E2) component of the 2-oxoglutarate dehydrogenase complex. The 2-oxoglutarate dehydrogenase complex catalyzes the overall conversion of 2-oxoglutarate to succinyl-CoA and CO(2). The 2-oxoglutarate dehydrogenase complex is mainly active in the mitochondrion. A fraction of the 2-oxoglutarate dehydrogenase complex also localizes in the nucleus and is required for lysine succinylation of histones: associates with KAT2A on chromatin and provides succinyl-CoA to histone succinyltransferase KAT2A. This Homo sapiens (Human) protein is Dihydrolipoyllysine-residue succinyltransferase component of 2-oxoglutarate dehydrogenase complex, mitochondrial.